The primary structure comprises 134 residues: ATP synthase epsilon chain (134 aa).

This sequence belongs to the ATPase epsilon chain family. As to quaternary structure, F-type ATPases have 2 components, CF(1) - the catalytic core - and CF(0) - the membrane proton channel. CF(1) has five subunits: alpha(3), beta(3), gamma(1), delta(1), epsilon(1). CF(0) has three main subunits: a, b and c.

Its subcellular location is the cell membrane. Its function is as follows. Produces ATP from ADP in the presence of a proton gradient across the membrane. The polypeptide is ATP synthase epsilon chain (Clostridium botulinum (strain Alaska E43 / Type E3)).